The chain runs to 257 residues: Ditrans,polycis-undecaprenyl-diphosphate synthase ((2E,6E)-farnesyl-diphosphate specific) (257 aa).

Residue D24 is part of the active site. D24 serves as a coordination point for Mg(2+). Substrate contacts are provided by residues 25–28 (GNGR), W29, R37, H41, and 69–71 (SSE). N72 (proton acceptor) is an active-site residue. Substrate is bound by residues W73, R75, R192, and 198-200 (RIS). E211 is a binding site for Mg(2+).

This sequence belongs to the UPP synthase family. In terms of assembly, homodimer. Mg(2+) is required as a cofactor.

It catalyses the reaction 8 isopentenyl diphosphate + (2E,6E)-farnesyl diphosphate = di-trans,octa-cis-undecaprenyl diphosphate + 8 diphosphate. Its function is as follows. Catalyzes the sequential condensation of isopentenyl diphosphate (IPP) with (2E,6E)-farnesyl diphosphate (E,E-FPP) to yield (2Z,6Z,10Z,14Z,18Z,22Z,26Z,30Z,34E,38E)-undecaprenyl diphosphate (di-trans,octa-cis-UPP). UPP is the precursor of glycosyl carrier lipid in the biosynthesis of bacterial cell wall polysaccharide components such as peptidoglycan and lipopolysaccharide. This is Ditrans,polycis-undecaprenyl-diphosphate synthase ((2E,6E)-farnesyl-diphosphate specific) from Aliivibrio fischeri (strain ATCC 700601 / ES114) (Vibrio fischeri).